The chain runs to 346 residues: Tetraacyldisaccharide 4'-kinase (346 aa).

54–61 (TVGGAGKT) is an ATP binding site.

This sequence belongs to the LpxK family.

The catalysed reaction is a lipid A disaccharide + ATP = a lipid IVA + ADP + H(+). The protein operates within glycolipid biosynthesis; lipid IV(A) biosynthesis; lipid IV(A) from (3R)-3-hydroxytetradecanoyl-[acyl-carrier-protein] and UDP-N-acetyl-alpha-D-glucosamine: step 6/6. Functionally, transfers the gamma-phosphate of ATP to the 4'-position of a tetraacyldisaccharide 1-phosphate intermediate (termed DS-1-P) to form tetraacyldisaccharide 1,4'-bis-phosphate (lipid IVA). The protein is Tetraacyldisaccharide 4'-kinase of Sinorhizobium fredii (strain NBRC 101917 / NGR234).